We begin with the raw amino-acid sequence, 253 residues long: Trypsin delta (253 aa).

Positions 1-22 (MLKFVILLSAVACALGGTIPEG) are cleaved as a signal peptide. Residues 23–30 (LLPQLDGR) constitute a propeptide, activation peptide. The Peptidase S1 domain occupies 31 to 253 (IVGGTATTIS…DLRAWVVRNA (223 aa)). Cys-56 and Cys-72 are disulfide-bonded. Active-site charge relay system residues include His-71 and Asp-116. Intrachain disulfides connect Cys-180/Cys-197 and Cys-206/Cys-230. Residue Ser-210 is the Charge relay system of the active site.

Belongs to the peptidase S1 family.

The protein resides in the secreted. The protein localises to the extracellular space. The enzyme catalyses Preferential cleavage: Arg-|-Xaa, Lys-|-Xaa.. The sequence is that of Trypsin delta from Drosophila erecta (Fruit fly).